The sequence spans 237 residues: MTRKVSRRLQELQKKVEDRAYEPLAALNLLKETATAKFPESAEAHIRLGIDPKYTDQQLRTTVALPKGTGQTIRVAVIARGEKVAEAKAAGADIAGSEELIEEISKGFLDFDLLIATPDVMPQVAKLGRQLGPRGLMPSPKGGTVTFDLEQAINEFKAGKLEFRADRTGIVHVLFGKASFSADDLLANLKALQETIDRNRPSGAKGRYWRSVYISATMGPAIEVDINALRDLKLAEA.

Belongs to the universal ribosomal protein uL1 family. Part of the 50S ribosomal subunit.

Its function is as follows. Binds directly to 23S rRNA. The L1 stalk is quite mobile in the ribosome, and is involved in E site tRNA release. Protein L1 is also a translational repressor protein, it controls the translation of the L11 operon by binding to its mRNA. The sequence is that of Large ribosomal subunit protein uL1 from Synechococcus elongatus (strain ATCC 33912 / PCC 7942 / FACHB-805) (Anacystis nidulans R2).